Consider the following 429-residue polypeptide: Protein ABERRANT PANICLE ORGANIZATION 1 (429 aa).

Pro residues predominate over residues methionine 1–proline 11. The disordered stretch occupies residues methionine 1 to aspartate 21. In terms of domain architecture, F-box spans proline 25–histidine 71. Helical transmembrane passes span leucine 72–leucine 92 and valine 112–leucine 132. Kelch repeat units follow at residues methionine 229–glycine 277, arginine 284–glycine 339, and tyrosine 350–glycine 397.

In terms of assembly, part of a putative SCF (ASK/Cullin/F-box) ubiquitin ligase complex. Interacts with FL/APO2. In terms of tissue distribution, expressed in seedlings, roots, leaves, shoot apical meristem (SAM), developing panicles, and, at lower levels, in developing seeds.

The protein localises to the membrane. Its pathway is protein modification; protein ubiquitination. Its function is as follows. Component of SCF(ASK-cullin-F-box) E3 ubiquitin ligase complexes, which may mediate the ubiquitination and subsequent proteasomal degradation of target proteins. Together with FL/APO2, involved in the temporal regulation of meristem identity during both vegetative and reproductive developments in an APO2-dependent manner. Promotes spikelet formation by suppressing the precocious conversion of inflorescence meristems to spikelet meristems, probably via a positive regulation of class-C floral homeotic genes, but not of class-B genes, and through the control of cell proliferation in meristems. Mediates culm development and strength/diameter enhancement at internodes. Required for the regulation of the plastochron, floral organ identity, and floral determinacy. Controls the number of primary rachis branches (PRBs). May trigger the formation of vascular bundle systems which, consequently, promote carbohydrate translocation to panicles. Involved in ozone-induced grain yield regulation. The polypeptide is Protein ABERRANT PANICLE ORGANIZATION 1 (Oryza sativa subsp. indica (Rice)).